We begin with the raw amino-acid sequence, 78 residues long: Small ribosomal subunit protein bS16c (78 aa).

It belongs to the bacterial ribosomal protein bS16 family.

Its subcellular location is the plastid. The protein resides in the chloroplast. The polypeptide is Small ribosomal subunit protein bS16c (Amborella trichopoda).